The primary structure comprises 254 residues: Cell wall biogenesis protein NCW2 (254 aa).

Positions M1–A17 are cleaved as a signal peptide. Disordered regions lie at residues K19–T57, T111–V143, and A167–K191. A compositionally biased stretch (low complexity) spans Q27 to E42. The span at I43–T57 shows a compositional bias: polar residues. The segment covering T111–T139 has biased composition (low complexity). A glycan (N-linked (GlcNAc...) asparagine) is linked at N229. N232 carries the GPI-anchor amidated asparagine lipid modification. The propeptide at G233–L254 is removed in mature form.

The protein localises to the cell membrane. Its function is as follows. Cell wall biogenesis protein that participates in the organization of the beta-glucan assembly. Involved in the mechanism responsible for cell tolerance to polyhexamethylene biguanide (PHMB), an antifungal agent. The protein is Cell wall biogenesis protein NCW2 of Saccharomyces cerevisiae (strain ATCC 204508 / S288c) (Baker's yeast).